Reading from the N-terminus, the 347-residue chain is Beta carbonic anhydrase 1, chloroplastic (347 aa).

The transit peptide at 1-113 directs the protein to the chloroplast; that stretch reads MSTAPLSGFF…AAAKVEQITA (113 aa). Residue Ala114 is modified to N-acetylalanine. A Phosphoserine modification is found at Ser175. Tyr203 is modified (phosphotyrosine). Ser266 bears the Phosphoserine mark. Cys280 is subject to S-nitrosocysteine.

The protein belongs to the beta-class carbonic anhydrase family. Homohexamer. Post-translationally, S-nitrosylation at Cys-280 is up-regulated during nitrosative burst and suppresses both binding of salicylic acid and carbonic anhydrase activity. S-nitrosylated in response to an avirulent but not to a virulent bacterial strain. As to expression, strongly expressed in aerial tissues including leaves, stems, flowers and siliques. Accumulates in both guard cells and mesophyll cells.

It localises to the plastid. The protein resides in the chloroplast stroma. The protein localises to the cell membrane. It carries out the reaction hydrogencarbonate + H(+) = CO2 + H2O. Its function is as follows. Reversible hydration of carbon dioxide. Required for photosynthesis in cotyledons. Binds salicylic acid. Together with BCA4, involved in the CO(2) signaling pathway which controls gas-exchange between plants and the atmosphere by modulating stomatal development and movements. Promotes water use efficiency. This Arabidopsis thaliana (Mouse-ear cress) protein is Beta carbonic anhydrase 1, chloroplastic.